Reading from the N-terminus, the 111-residue chain is Large ribosomal subunit protein uL22 (111 aa).

It belongs to the universal ribosomal protein uL22 family. Part of the 50S ribosomal subunit.

Its function is as follows. This protein binds specifically to 23S rRNA; its binding is stimulated by other ribosomal proteins, e.g. L4, L17, and L20. It is important during the early stages of 50S assembly. It makes multiple contacts with different domains of the 23S rRNA in the assembled 50S subunit and ribosome. Functionally, the globular domain of the protein is located near the polypeptide exit tunnel on the outside of the subunit, while an extended beta-hairpin is found that lines the wall of the exit tunnel in the center of the 70S ribosome. In Geotalea daltonii (strain DSM 22248 / JCM 15807 / FRC-32) (Geobacter daltonii), this protein is Large ribosomal subunit protein uL22.